The following is a 213-amino-acid chain: 5''-phosphoribostamycin phosphatase (213 aa).

His-8 (tele-phosphohistidine intermediate) is an active-site residue. His-155 is a catalytic residue.

The protein belongs to the histidine phosphatase superfamily.

The enzyme catalyses 5''-phosphoribostamycin + H2O = ribostamycin + phosphate. It participates in antibiotic biosynthesis; butirosin biosynthesis. In terms of biological role, catalyzes dephosphorylation of 5''-phosphoribostamycin to generate ribostamycinin the biosynthetic pathway of butirosin. The polypeptide is 5''-phosphoribostamycin phosphatase (btrP) (Niallia circulans (Bacillus circulans)).